Reading from the N-terminus, the 86-residue chain is Large ribosomal subunit protein uL23 (86 aa).

The protein belongs to the universal ribosomal protein uL23 family. In terms of assembly, part of the 50S ribosomal subunit. Contacts protein L29.

In terms of biological role, binds to 23S rRNA. One of the proteins that surrounds the polypeptide exit tunnel on the outside of the ribosome. The chain is Large ribosomal subunit protein uL23 from Pyrococcus abyssi (strain GE5 / Orsay).